Here is a 53-residue protein sequence, read N- to C-terminus: Large ribosomal subunit protein eL40 (53 aa).

It belongs to the eukaryotic ribosomal protein eL40 family.

The chain is Large ribosomal subunit protein eL40 from Pyrobaculum neutrophilum (strain DSM 2338 / JCM 9278 / NBRC 100436 / V24Sta) (Thermoproteus neutrophilus).